We begin with the raw amino-acid sequence, 358 residues long: Peptide chain release factor 1 (358 aa).

Residue Gln-233 is modified to N5-methylglutamine.

It belongs to the prokaryotic/mitochondrial release factor family. Post-translationally, methylated by PrmC. Methylation increases the termination efficiency of RF1.

It localises to the cytoplasm. Its function is as follows. Peptide chain release factor 1 directs the termination of translation in response to the peptide chain termination codons UAG and UAA. The sequence is that of Peptide chain release factor 1 from Brevibacillus brevis (strain 47 / JCM 6285 / NBRC 100599).